The sequence spans 461 residues: Phosphomethylpyrimidine synthase (461 aa).

Residues asparagine 80, methionine 109, tyrosine 139, histidine 174, 194–196 (SRG), 235–238 (DSLR), and glutamate 274 contribute to the substrate site. Histidine 278 serves as a coordination point for Zn(2+). Substrate is bound at residue tyrosine 301. Histidine 342 is a binding site for Zn(2+). [4Fe-4S] cluster-binding residues include cysteine 422, cysteine 425, and cysteine 430.

This sequence belongs to the ThiC family. In terms of assembly, homodimer. [4Fe-4S] cluster is required as a cofactor.

It carries out the reaction 5-amino-1-(5-phospho-beta-D-ribosyl)imidazole + S-adenosyl-L-methionine = 4-amino-2-methyl-5-(phosphooxymethyl)pyrimidine + CO + 5'-deoxyadenosine + formate + L-methionine + 3 H(+). It functions in the pathway cofactor biosynthesis; thiamine diphosphate biosynthesis. Catalyzes the synthesis of the hydroxymethylpyrimidine phosphate (HMP-P) moiety of thiamine from aminoimidazole ribotide (AIR) in a radical S-adenosyl-L-methionine (SAM)-dependent reaction. This chain is Phosphomethylpyrimidine synthase, found in Nautilia profundicola (strain ATCC BAA-1463 / DSM 18972 / AmH).